The following is a 462-amino-acid chain: Argininosuccinate lyase (462 aa).

It belongs to the lyase 1 family. Argininosuccinate lyase subfamily.

It is found in the cytoplasm. The catalysed reaction is 2-(N(omega)-L-arginino)succinate = fumarate + L-arginine. It functions in the pathway amino-acid biosynthesis; L-arginine biosynthesis; L-arginine from L-ornithine and carbamoyl phosphate: step 3/3. The sequence is that of Argininosuccinate lyase from Caldicellulosiruptor saccharolyticus (strain ATCC 43494 / DSM 8903 / Tp8T 6331).